An 819-amino-acid polypeptide reads, in one-letter code: Leucine--tRNA ligase (819 aa).

The short motif at 42-52 is the 'HIGH' region element; sequence PYPSGRLHMGH. A 'KMSKS' region motif is present at residues 576 to 580; sequence KMSKS. Residue Lys-579 coordinates ATP.

Belongs to the class-I aminoacyl-tRNA synthetase family.

It localises to the cytoplasm. The catalysed reaction is tRNA(Leu) + L-leucine + ATP = L-leucyl-tRNA(Leu) + AMP + diphosphate. This chain is Leucine--tRNA ligase, found in Nitrosococcus oceani (strain ATCC 19707 / BCRC 17464 / JCM 30415 / NCIMB 11848 / C-107).